Reading from the N-terminus, the 137-residue chain is Large ribosomal subunit protein uL16 (137 aa).

The segment covering 1–17 has biased composition (basic residues); that stretch reads MLQPKRTKFRKTHKGRN. Positions 1-24 are disordered; sequence MLQPKRTKFRKTHKGRNRGLANTG.

This sequence belongs to the universal ribosomal protein uL16 family. In terms of assembly, part of the 50S ribosomal subunit.

In terms of biological role, binds 23S rRNA and is also seen to make contacts with the A and possibly P site tRNAs. The protein is Large ribosomal subunit protein uL16 of Aeromonas salmonicida (strain A449).